The following is a 124-amino-acid chain: Small ribosomal subunit protein uS12 (124 aa).

The segment at 1–28 (MPTINQLVRKGRTPKVSKTKAPALKGSP) is disordered. Positions 9-18 (RKGRTPKVSK) are enriched in basic residues. D89 carries the 3-methylthioaspartic acid modification.

The protein belongs to the universal ribosomal protein uS12 family. As to quaternary structure, part of the 30S ribosomal subunit. Contacts proteins S8 and S17. May interact with IF1 in the 30S initiation complex.

Its function is as follows. With S4 and S5 plays an important role in translational accuracy. Functionally, interacts with and stabilizes bases of the 16S rRNA that are involved in tRNA selection in the A site and with the mRNA backbone. Located at the interface of the 30S and 50S subunits, it traverses the body of the 30S subunit contacting proteins on the other side and probably holding the rRNA structure together. The combined cluster of proteins S8, S12 and S17 appears to hold together the shoulder and platform of the 30S subunit. The sequence is that of Small ribosomal subunit protein uS12 from Paenarthrobacter aurescens (strain TC1).